A 332-amino-acid polypeptide reads, in one-letter code: T-cell surface glycoprotein CD1c1 (332 aa).

Residues 1–17 form the signal peptide; sequence MLFLHFLFLDVVLGGSI. Residues 18 to 300 are Extracellular-facing; sequence TENVVQENIS…IILYWGHGLS (283 aa). 4 N-linked (GlcNAc...) asparagine glycosylation sites follow: Asn25, Asn38, Asn75, and Asn146. Intrachain disulfides connect Cys120-Cys184 and Cys224-Cys279. An Ig-like domain is found at 205–292; the sequence is PEVWLSSSPN…HSSLRDQDII (88 aa). Residues 301–321 form a helical membrane-spanning segment; it reads VILITFAVIVPLVLLIVLMLL. Topologically, residues 322–332 are cytoplasmic; that stretch reads YKKRCTYQGIQ.

Heterodimer with B2M (beta-2-microglobulin).

Its subcellular location is the cell membrane. The protein resides in the endosome membrane. In terms of biological role, antigen-presenting protein that binds self and non-self lipid and glycolipid antigens and presents them to T-cell receptors on natural killer T-cells. The sequence is that of T-cell surface glycoprotein CD1c1 (CD1C1) from Cavia porcellus (Guinea pig).